Consider the following 291-residue polypeptide: N-acetylmannosamine kinase (291 aa).

ATP contacts are provided by residues 5 to 12 (AIDIGGTK) and 132 to 139 (GVGGGVVC). Positions 156, 166, 168, and 173 each coordinate Zn(2+).

It belongs to the ROK (NagC/XylR) family. NanK subfamily. Homodimer.

It catalyses the reaction an N-acyl-D-mannosamine + ATP = an N-acyl-D-mannosamine 6-phosphate + ADP + H(+). The protein operates within amino-sugar metabolism; N-acetylneuraminate degradation; D-fructose 6-phosphate from N-acetylneuraminate: step 2/5. Catalyzes the phosphorylation of N-acetylmannosamine (ManNAc) to ManNAc-6-P. The chain is N-acetylmannosamine kinase from Salmonella gallinarum (strain 287/91 / NCTC 13346).